The sequence spans 255 residues: DNA repair protein RecO (255 aa).

It belongs to the RecO family.

Functionally, involved in DNA repair and RecF pathway recombination. In Listeria welshimeri serovar 6b (strain ATCC 35897 / DSM 20650 / CCUG 15529 / CIP 8149 / NCTC 11857 / SLCC 5334 / V8), this protein is DNA repair protein RecO.